The following is a 212-amino-acid chain: Small ribosomal subunit protein uS2 (212 aa).

Residues 190–212 (LSPDAPEDQPAPVSEFETKVKMV) form a disordered region.

The protein belongs to the universal ribosomal protein uS2 family.

This Ignicoccus hospitalis (strain KIN4/I / DSM 18386 / JCM 14125) protein is Small ribosomal subunit protein uS2.